We begin with the raw amino-acid sequence, 1165 residues long: DNA-directed RNA polymerase III subunit RPC2 (1165 aa).

A disordered region spans residues 1-21 (MGVNTAGDPQKSQPKINKGGI). Residues cysteine 1111, cysteine 1114, cysteine 1123, and cysteine 1126 each contribute to the Zn(2+) site. The C4-type zinc-finger motif lies at 1111–1126 (CGQCGLLGYKGWCNSC).

This sequence belongs to the RNA polymerase beta chain family. As to quaternary structure, component of the RNA polymerase III (Pol III) complex consisting of 17 subunits.

The protein localises to the nucleus. It carries out the reaction RNA(n) + a ribonucleoside 5'-triphosphate = RNA(n+1) + diphosphate. In terms of biological role, DNA-dependent RNA polymerase catalyzes the transcription of DNA into RNA using the four ribonucleoside triphosphates as substrates. Second largest core component of RNA polymerase III which synthesizes small RNAs, such as 5S rRNA and tRNAs. Proposed to contribute to the polymerase catalytic activity and forms the polymerase active center together with the largest subunit. Pol III is composed of mobile elements and RPC2 is part of the core element with the central large cleft and probably a clamp element that moves to open and close the cleft. This is DNA-directed RNA polymerase III subunit RPC2 (rpc2) from Schizosaccharomyces pombe (strain 972 / ATCC 24843) (Fission yeast).